Consider the following 247-residue polypeptide: ATP synthase subunit a, chloroplastic (247 aa).

5 consecutive transmembrane segments (helical) span residues 38-58, 95-115, 134-154, 199-219, and 220-240; these read QVLITSWVVITILLGSVVIAV, VPFIGTMFLFIFVSNWSGALL, INTTVALALLTSAAYFYAGLS, LVVVVLVSLVPLVIPIPVMFL, and GLFTSGIQALIFATLAAAYIG.

It belongs to the ATPase A chain family. F-type ATPases have 2 components, CF(1) - the catalytic core - and CF(0) - the membrane proton channel. CF(1) has five subunits: alpha(3), beta(3), gamma(1), delta(1), epsilon(1). CF(0) has four main subunits: a, b, b' and c.

Its subcellular location is the plastid. It localises to the chloroplast thylakoid membrane. Its function is as follows. Key component of the proton channel; it plays a direct role in the translocation of protons across the membrane. The sequence is that of ATP synthase subunit a, chloroplastic from Hordeum vulgare (Barley).